Reading from the N-terminus, the 252-residue chain is MTTIDLNSDLGESYGSWVMGNDVAVLDLVSSANIACGFHAGDATVLFKTVRAAHARHVRIGAHIGYNDIAGFGRRNLDVAHDDLVAETIYQIGAIQAAAKASGAVVEYVKPHGALYNTIAVDEAQAAAVIEGIKLVNPELSLMALAGSQIVEQARAAGLQVEQETFADRAYTADGQLVSRKLPGAVLHDPETAARQALAFATGQPITAITGESVLVDANSICVHGDNPQALALVEKIVTTLAAHEVQVSHAR.

It belongs to the LamB/PxpA family. In terms of assembly, forms a complex composed of PxpA, PxpB and PxpC.

The enzyme catalyses 5-oxo-L-proline + ATP + 2 H2O = L-glutamate + ADP + phosphate + H(+). Catalyzes the cleavage of 5-oxoproline to form L-glutamate coupled to the hydrolysis of ATP to ADP and inorganic phosphate. This Corynebacterium glutamicum (strain R) protein is 5-oxoprolinase subunit A.